Reading from the N-terminus, the 490-residue chain is Betaine aldehyde dehydrogenase (490 aa).

Residues isoleucine 27 and aspartate 93 each contribute to the K(+) site. Glycine 150–tryptophan 152 lines the NAD(+) pocket. Catalysis depends on lysine 162, which acts as the Charge relay system. Lysine 176–glutamate 179 contributes to the NAD(+) binding site. Residue valine 180 participates in K(+) binding. Glycine 230–threonine 233 serves as a coordination point for NAD(+). Leucine 246 is a K(+) binding site. Catalysis depends on glutamate 252, which acts as the Proton acceptor. Positions 254, 286, and 387 each coordinate NAD(+). Cysteine 286 acts as the Nucleophile in catalysis. A Cysteine sulfenic acid (-SOH) modification is found at cysteine 286. Positions 457 and 460 each coordinate K(+). Catalysis depends on glutamate 464, which acts as the Charge relay system.

Belongs to the aldehyde dehydrogenase family. Dimer of dimers. K(+) serves as cofactor.

It catalyses the reaction betaine aldehyde + NAD(+) + H2O = glycine betaine + NADH + 2 H(+). It functions in the pathway amine and polyamine biosynthesis; betaine biosynthesis via choline pathway; betaine from betaine aldehyde: step 1/1. In terms of biological role, involved in the biosynthesis of the osmoprotectant glycine betaine. Catalyzes the irreversible oxidation of betaine aldehyde to the corresponding acid. This is Betaine aldehyde dehydrogenase from Pseudomonas putida (strain W619).